Consider the following 157-residue polypeptide: Holo-[acyl-carrier-protein] synthase (157 aa).

Mg(2+)-binding residues include D8 and E59.

The protein belongs to the P-Pant transferase superfamily. AcpS family. Mg(2+) serves as cofactor.

Its subcellular location is the cytoplasm. It catalyses the reaction apo-[ACP] + CoA = holo-[ACP] + adenosine 3',5'-bisphosphate + H(+). Transfers the 4'-phosphopantetheine moiety from coenzyme A to a Ser of acyl-carrier-protein. In Gluconobacter oxydans (strain 621H) (Gluconobacter suboxydans), this protein is Holo-[acyl-carrier-protein] synthase.